A 286-amino-acid polypeptide reads, in one-letter code: MAASSSSLLLLHKPTYNFHFAASSVPTYINSARFRISSSIFPLDRRRRRRIWSVSGFKSMADLVKTNARRDGEDRFQALEQEAFISNSSSELQNELVSDAGDGIEAIANRLSKWIVAALFGSVLLLRHDGAALWAVIGSVSNSVLSVALKRILNQERPVATLRSDPGMPSSHAQSISFISVFSVFSVMEWLGTNVLSLFLSGFILALGSYFTWLRVSQKLHTTSQVVVGAIVGSVYSTLWYVTWNSLVLEAFTSTFSVQIALFLVAAASALGFAVYVLLNWFKDDR.

Residues 1–60 constitute a chloroplast transit peptide; the sequence is MAASSSSLLLLHKPTYNFHFAASSVPTYINSARFRISSSIFPLDRRRRRRIWSVSGFKSM. 5 helical membrane-spanning segments follow: residues 133–149, 173–193, 194–214, 226–246, and 260–280; these read LWAV…SVAL, AQSI…WLGT, NVLS…FTWL, VVVG…TWNS, and IALF…VLLN.

It belongs to the PA-phosphatase related phosphoesterase family. As to expression, expressed in root tips, root branch points, cotyledons and leaves.

It localises to the plastid. The protein localises to the chloroplast inner membrane. Its activity is regulated as follows. Inhibited by Mg(2+). Exhibits phosphatidate phosphatase (PAP) activity in vitro. May play a secondary role as PAP in plastids. This is Lipid phosphate phosphatase epsilon 2, chloroplastic (LPPE2) from Arabidopsis thaliana (Mouse-ear cress).